A 213-amino-acid polypeptide reads, in one-letter code: Kynurenine formamidase (213 aa).

Trp18 is a substrate binding site. His48, His52, and Asp54 together coordinate Zn(2+). His58 serves as the catalytic Proton donor/acceptor. Residues His160 and Glu172 each coordinate Zn(2+).

The protein belongs to the Cyclase 1 superfamily. KynB family. As to quaternary structure, homodimer. The cofactor is Zn(2+).

It carries out the reaction N-formyl-L-kynurenine + H2O = L-kynurenine + formate + H(+). The protein operates within amino-acid degradation; L-tryptophan degradation via kynurenine pathway; L-kynurenine from L-tryptophan: step 2/2. Functionally, catalyzes the hydrolysis of N-formyl-L-kynurenine to L-kynurenine, the second step in the kynurenine pathway of tryptophan degradation. The chain is Kynurenine formamidase from Burkholderia multivorans (strain ATCC 17616 / 249).